The chain runs to 802 residues: Chromosome alignment-maintaining phosphoprotein 1 (802 aa).

An N-acetylmethionine modification is found at Met1. A compositionally biased stretch (basic and acidic residues) spans 88–105; it reads SDKWSEQPKEQPSKDTES. The interval 88–475 is disordered; sequence SDKWSEQPKE…PDLWKSSFIM (388 aa). At Ser108 the chain carries Phosphoserine. Polar residues predominate over residues 135–148; the sequence is QKTSPSLCPESQAS. Positions 185 to 203 are enriched in basic and acidic residues; it reads ERVDPPCELPELEKPERGP. Residues Ser204, Ser207, Ser234, Ser237, Ser243, Ser252, Ser254, Ser265, Ser272, Ser276, Ser298, Ser309, Ser334, Ser345, and Ser365 each carry the phosphoserine modification. A mediates interaction with MAD2L2 region spans residues 261–479; it reads ARTASPEPRK…KSSFIMESQK (219 aa). Pro residues predominate over residues 332–351; that stretch reads PMSPGPWKPIPSVSPGPWKP. The segment covering 354 to 368 has biased composition (low complexity); that stretch reads SMSTASWKSSVSSGS. Polar residues predominate over residues 369–378; the sequence is WKTPPTSPES. Thr371 is subject to Phosphothreonine. 9 positions are modified to phosphoserine: Ser375, Ser394, Ser405, Ser416, Ser421, Ser425, Ser432, Ser434, and Ser441. The mediates localization to the spindle and the kinetochore and is required for the attachment of spindle microtubules to the kinetochore stretch occupies residues 440–580; the sequence is VSPDQRKTSP…EIQLEAVDNA (141 aa). Thr447 is modified (phosphothreonine). 3 positions are modified to phosphoserine: Ser448, Ser451, and Ser461. Lys479 carries the post-translational modification N6-acetyllysine; alternate. Lys479 participates in a covalent cross-link: Glycyl lysine isopeptide (Lys-Gly) (interchain with G-Cter in SUMO2); alternate. Ser497, Ser502, and Ser532 each carry phosphoserine. Residue Lys555 forms a Glycyl lysine isopeptide (Lys-Gly) (interchain with G-Cter in SUMO2) linkage. The interval 581–802 is mediates localization to the chromosome and the spindle and negatively regulates chromosome alignment; the sequence is KCDSLAQEGL…LESPLEEQQI (222 aa). Residue Thr593 is modified to Phosphothreonine. Lys596 participates in a covalent cross-link: Glycyl lysine isopeptide (Lys-Gly) (interchain with G-Cter in SUMO2). 7 positions are modified to phosphoserine: Ser603, Ser605, Ser617, Ser622, Ser641, Ser642, and Ser643. The tract at residues 603–625 is disordered; the sequence is SPSSKKLKKDSQENSDAELSSSE. Lys660 participates in a covalent cross-link: Glycyl lysine isopeptide (Lys-Gly) (interchain with G-Cter in SUMO2). The residue at position 665 (Ser665) is a Phosphoserine. Residue Lys679 forms a Glycyl lysine isopeptide (Lys-Gly) (interchain with G-Cter in SUMO2) linkage. Ser726 carries the phosphoserine modification. The C2H2-type zinc-finger motif lies at 728 to 750; the sequence is YKCTICGKAFLLESLLKNHVAAH.

Interacts with MAD2L2. Interacts with POGZ, CBX1, CBX3 and CBX5. Phosphorylated by CDK1. Mitotic phosphorylation is required for the attachment of spindle microtubules to the kinetochore.

Its subcellular location is the nucleus. It localises to the chromosome. The protein resides in the centromere. The protein localises to the kinetochore. It is found in the cytoplasm. Its subcellular location is the cytoskeleton. It localises to the spindle. Required for proper alignment of chromosomes at metaphase and their accurate segregation during mitosis. Involved in the maintenance of spindle microtubules attachment to the kinetochore during sister chromatid biorientation. May recruit CENPE and CENPF to the kinetochore. This is Chromosome alignment-maintaining phosphoprotein 1 (Champ1) from Mus musculus (Mouse).